The chain runs to 207 residues: dTTP/UTP pyrophosphatase (207 aa).

D79 serves as the catalytic Proton acceptor.

The protein belongs to the Maf family. YhdE subfamily. Requires a divalent metal cation as cofactor.

It is found in the cytoplasm. The enzyme catalyses dTTP + H2O = dTMP + diphosphate + H(+). It catalyses the reaction UTP + H2O = UMP + diphosphate + H(+). Functionally, nucleoside triphosphate pyrophosphatase that hydrolyzes dTTP and UTP. May have a dual role in cell division arrest and in preventing the incorporation of modified nucleotides into cellular nucleic acids. This chain is dTTP/UTP pyrophosphatase, found in Rhodopseudomonas palustris (strain HaA2).